The sequence spans 330 residues: MSNYFSMEAFDYDDIQLVPNKCIIKSRSEADTGVKFGSRTFKIPVVPANMESVIDEDLAIWLAEHGYYYVMHRFYPEKRADFIKMMHDKGLFASISVGIKDSEYDFIDYLAKENIIPEYTTIDVAHGHSDYVIKMIKYIKEKLPDTFLTAGNIATPEAVRELENAGADATKVGVGPGRACITKLKTGFGTGGWQLAALRMCSKAARKPLIADGGIRHNGDIAKSVRFGASMVMIGSLFAGHEESPGNLITIDGKRYKQYWGSASEVQKGAYRNVEGKQMLVPYRGSIKDTLREMQEDLQSSISYAGGKDLSAIRVVDYVIVKSSIFDGDK.

Catalysis depends on Cys-180, which acts as the Thioimidate intermediate. An NADP(+)-binding site is contributed by 209–232 (LIADGGIRHNGDIAKSVRFGASMV).

The protein belongs to the IMPDH/GMPR family. GuaC type 2 subfamily.

It catalyses the reaction IMP + NH4(+) + NADP(+) = GMP + NADPH + 2 H(+). Functionally, catalyzes the irreversible NADPH-dependent deamination of GMP to IMP. It functions in the conversion of nucleobase, nucleoside and nucleotide derivatives of G to A nucleotides, and in maintaining the intracellular balance of A and G nucleotides. In Lactobacillus johnsonii (strain CNCM I-12250 / La1 / NCC 533), this protein is GMP reductase.